The sequence spans 96 residues: Large ribosomal subunit protein bL21 (96 aa).

It belongs to the bacterial ribosomal protein bL21 family. Part of the 50S ribosomal subunit. Contacts protein L20.

In terms of biological role, this protein binds to 23S rRNA in the presence of protein L20. The sequence is that of Large ribosomal subunit protein bL21 from Prosthecochloris aestuarii (strain DSM 271 / SK 413).